Consider the following 576-residue polypeptide: Mitogen-activated protein kinase 15 (576 aa).

Residues arginine 20–lysine 50 are disordered. Over residues asparagine 28–proline 42 the composition is skewed to polar residues. Residues tyrosine 90–phenylalanine 381 enclose the Protein kinase domain. Residues valine 96–valine 104 and lysine 119 contribute to the ATP site. Aspartate 216 serves as the catalytic Proton acceptor. At threonine 252 the chain carries Phosphothreonine. Positions threonine 252–tyrosine 254 match the TXY motif. Residue tyrosine 254 is modified to Phosphotyrosine. At threonine 257 the chain carries Phosphothreonine. Residues glutamate 458–methionine 535 are disordered. Residues leucine 477–threonine 501 are compositionally biased toward basic and acidic residues. The span at alanine 504 to glycine 520 shows a compositional bias: polar residues.

The protein belongs to the protein kinase superfamily. CMGC Ser/Thr protein kinase family. MAP kinase subfamily. As to quaternary structure, interacts with MKK7. In terms of processing, dually phosphorylated on Thr-252 and Tyr-254, which activates the enzyme.

The enzyme catalyses L-seryl-[protein] + ATP = O-phospho-L-seryl-[protein] + ADP + H(+). It carries out the reaction L-threonyl-[protein] + ATP = O-phospho-L-threonyl-[protein] + ADP + H(+). With respect to regulation, activated by threonine and tyrosine phosphorylation. In Arabidopsis thaliana (Mouse-ear cress), this protein is Mitogen-activated protein kinase 15 (MPK15).